The primary structure comprises 818 residues: Serine/threonine-protein phosphatase 4 regulatory subunit 3 (818 aa).

Residues 1 to 100 (MTDTRRRVKV…DEIWEKICQV (100 aa)) form the WH1 domain. Residues 718–818 (LAKSSFSGRQ…PPSKKSRLSS (101 aa)) are disordered. Residues 721–730 (SSFSGRQNPS) show a composition bias toward polar residues. Residues 736 to 756 (SGSTKTSLSSPPPSASLSPGS) are compositionally biased toward low complexity. Positions 788–804 (YPDDDEEEEDDDDEESK) are enriched in acidic residues.

Belongs to the SMEK family. As to quaternary structure, serine/threonine-protein phosphatase 4 (PP4) occurs in different assemblies of the catalytic and one or more regulatory subunits.

Functionally, regulatory subunit of serine/threonine-protein phosphatase 4. This is Serine/threonine-protein phosphatase 4 regulatory subunit 3 (smek1) from Tetraodon nigroviridis (Spotted green pufferfish).